Reading from the N-terminus, the 602-residue chain is Elongation factor 4 (602 aa).

Residues 7 to 189 (KKIRNFSIIA…SIVKNVPSPK (183 aa)) form the tr-type G domain. GTP-binding positions include 19–24 (DHGKST) and 136–139 (NKID).

The protein belongs to the TRAFAC class translation factor GTPase superfamily. Classic translation factor GTPase family. LepA subfamily.

The protein resides in the cell membrane. The catalysed reaction is GTP + H2O = GDP + phosphate + H(+). Functionally, required for accurate and efficient protein synthesis under certain stress conditions. May act as a fidelity factor of the translation reaction, by catalyzing a one-codon backward translocation of tRNAs on improperly translocated ribosomes. Back-translocation proceeds from a post-translocation (POST) complex to a pre-translocation (PRE) complex, thus giving elongation factor G a second chance to translocate the tRNAs correctly. Binds to ribosomes in a GTP-dependent manner. The polypeptide is Elongation factor 4 (Alkaliphilus oremlandii (strain OhILAs) (Clostridium oremlandii (strain OhILAs))).